We begin with the raw amino-acid sequence, 111 residues long: uncharacterized protein (111 aa).

Residues 8-111 (LFLKIIKREE…HVHIIPYYKK (104 aa)) form the HIT domain. The Histidine triad motif motif lies at 100 to 104 (HTHVH).

This is an uncharacterized protein from Mesomycoplasma hyorhinis (Mycoplasma hyorhinis).